The primary structure comprises 407 residues: L-cysteine:1D-myo-inositol 2-amino-2-deoxy-alpha-D-glucopyranoside ligase (407 aa).

The disordered stretch occupies residues 1-22 (MRSWSAPDIVPLPGTGGPLRVH). Cysteine 43 provides a ligand contact to Zn(2+). Residues 43–46 (CGIT), threonine 58, and 81–83 (NTT) each bind L-cysteinyl-5'-AMP. Positions 45-55 (ITPYDAAHLGH) match the 'HIGH' region motif. The short motif at 183-188 (ERGGDP) is the 'ERGGDP' region element. Tryptophan 223 contacts L-cysteinyl-5'-AMP. Cysteine 227 serves as a coordination point for Zn(2+). 245–247 (GSD) lines the L-cysteinyl-5'-AMP pocket. Histidine 252 contacts Zn(2+). An L-cysteinyl-5'-AMP-binding site is contributed by valine 278. A 'KMSKS' region motif is present at residues 284–288 (KMSKS).

The protein belongs to the class-I aminoacyl-tRNA synthetase family. MshC subfamily. In terms of assembly, monomer. Zn(2+) is required as a cofactor.

It carries out the reaction 1D-myo-inositol 2-amino-2-deoxy-alpha-D-glucopyranoside + L-cysteine + ATP = 1D-myo-inositol 2-(L-cysteinylamino)-2-deoxy-alpha-D-glucopyranoside + AMP + diphosphate + H(+). Catalyzes the ATP-dependent condensation of GlcN-Ins and L-cysteine to form L-Cys-GlcN-Ins. This Nocardiopsis dassonvillei (strain ATCC 23218 / DSM 43111 / CIP 107115 / JCM 7437 / KCTC 9190 / NBRC 14626 / NCTC 10488 / NRRL B-5397 / IMRU 509) (Actinomadura dassonvillei) protein is L-cysteine:1D-myo-inositol 2-amino-2-deoxy-alpha-D-glucopyranoside ligase.